The sequence spans 312 residues: MECAPPAAGFLYWVGASTIAYLALRASYSLFRAFQVWCVGNEALVGPRLGEWAVVTGGTDGIGKAYAEELAKRGMKIVLISRSQDKLNQVSNNIKEKFNVETRTIAVDFSLDDIYDKIKTGLSGLEIGVLVNNVGMSYEYPEYFLEIPDLDNTIKKLININVLSVCKVTRLVLPGMVERSKGVILNISSASGMLPVPLLTIYSATKAFVDFFSQCLHEEYKSKGIFVQSVMPYLVATKLAKIQKPTLDKPSAETFVKSAIKTVGLQTRTTGYVIHSLMGSINSIMPRWMYFKIIMGFSKSLRNRYLKKRKKN.

The chain crosses the membrane as a helical span at residues 4 to 24 (APPAAGFLYWVGASTIAYLAL). 50-79 (GEWAVVTGGTDGIGKAYAEELAKRGMKIVL) lines the NADP(+) pocket. 2 helical membrane passes run 182 to 202 (GVILNISSASGMLPVPLLTIY) and 269 to 285 (TTGYVIHSLMGSINSIM). Ser-189 contributes to the substrate binding site. The Proton acceptor role is filled by Tyr-202. A Di-lysine motif motif is present at residues 308–312 (KRKKN).

It belongs to the short-chain dehydrogenases/reductases (SDR) family. 17-beta-HSD 3 subfamily. Expressed in most tissues tested.

Its subcellular location is the endoplasmic reticulum membrane. It catalyses the reaction a very-long-chain (3R)-3-hydroxyacyl-CoA + NADP(+) = a very-long-chain 3-oxoacyl-CoA + NADPH + H(+). The enzyme catalyses 17beta-estradiol + NAD(+) = estrone + NADH + H(+). It carries out the reaction 17beta-estradiol + NADP(+) = estrone + NADPH + H(+). The catalysed reaction is 3-oxooctadecanoyl-CoA + NADPH + H(+) = (3R)-hydroxyoctadecanoyl-CoA + NADP(+). It catalyses the reaction (7Z,10Z,13Z,16Z)-3-oxodocosatetraenoyl-CoA + NADPH + H(+) = (3R)-hydroxy-(7Z,10Z,13Z,16Z)-docosatetraenoyl-CoA + NADP(+). The enzyme catalyses 3-oxo-(7Z,10Z,13Z,16Z,19Z)-docosapentaenoyl-CoA + NADPH + H(+) = (3R)-hydroxy-(7Z,10Z,13Z,16Z,19Z)-docosapentaenoyl-CoA + NADP(+). It carries out the reaction (8Z,11Z,14Z)-3-oxoeicosatrienoyl-CoA + NADPH + H(+) = (3R)-hydroxy-(8Z,11Z,14Z)-eicosatrienoyl-CoA + NADP(+). Its pathway is lipid metabolism; fatty acid biosynthesis. It participates in steroid biosynthesis; estrogen biosynthesis. Catalyzes the second of the four reactions of the long-chain fatty acids elongation cycle. This endoplasmic reticulum-bound enzymatic process, allows the addition of two carbons to the chain of long- and very long-chain fatty acids/VLCFAs per cycle. This enzyme has a 3-ketoacyl-CoA reductase activity, reducing 3-ketoacyl-CoA to 3-hydroxyacyl-CoA, within each cycle of fatty acid elongation. Thereby, it may participate in the production of VLCFAs of different chain lengths that are involved in multiple biological processes as precursors of membrane lipids and lipid mediators. May also catalyze the transformation of estrone (E1) into estradiol (E2) and play a role in estrogen formation. This chain is Very-long-chain 3-oxoacyl-CoA reductase, found in Mus musculus (Mouse).